Consider the following 443-residue polypeptide: NADH-quinone oxidoreductase subunit D 1 (443 aa).

This sequence belongs to the complex I 49 kDa subunit family. In terms of assembly, NDH-1 is composed of 14 different subunits. Subunits NuoB, C, D, E, F, and G constitute the peripheral sector of the complex.

Its subcellular location is the cell membrane. It carries out the reaction a quinone + NADH + 5 H(+)(in) = a quinol + NAD(+) + 4 H(+)(out). NDH-1 shuttles electrons from NADH, via FMN and iron-sulfur (Fe-S) centers, to quinones in the respiratory chain. The immediate electron acceptor for the enzyme in this species is believed to be a menaquinone. Couples the redox reaction to proton translocation (for every two electrons transferred, four hydrogen ions are translocated across the cytoplasmic membrane), and thus conserves the redox energy in a proton gradient. In Streptomyces avermitilis (strain ATCC 31267 / DSM 46492 / JCM 5070 / NBRC 14893 / NCIMB 12804 / NRRL 8165 / MA-4680), this protein is NADH-quinone oxidoreductase subunit D 1.